Reading from the N-terminus, the 224-residue chain is UPF0758 protein lin1584 (224 aa).

Residues Val-102–Phe-224 form the MPN domain. Residues His-173, His-175, and Asp-186 each coordinate Zn(2+). The JAMM motif motif lies at His-173–Asp-186.

Belongs to the UPF0758 family.

This Listeria innocua serovar 6a (strain ATCC BAA-680 / CLIP 11262) protein is UPF0758 protein lin1584.